Reading from the N-terminus, the 33-residue chain is Beta-theraphotoxin-Cm1a (33 aa).

3 cysteine pairs are disulfide-bonded: C2–C17, C9–C22, and C16–C29. L33 is subject to Leucine amide.

Belongs to the neurotoxin 10 (Hwtx-1) family. 04 (CcoTx1) subfamily. As to expression, expressed by the venom gland.

Its subcellular location is the secreted. Its function is as follows. Inhibits many voltage-gated sodium channels and one voltage-gated calcium channel (Cav2.2/CACNA1B (IC(50)=400 nM), Nav1.2/SCN2A (IC(50)=3-70 nM), Nav1.1/SCN1A (IC(50)=523-1060 nM), Nav1.7/SCN9A (IC(50)=129.1-5120 nM), Nav1.4/SCN4A (IC(50)=263-888 nM or &gt;10 uM) and Nav1.5/SCN5A (IC(50)=188-323 nM or &gt;10 uM)). It acts by shifting the voltage dependence of channel activation to more depolarized potentials and by blocking the inward component of the sodium current. It shows moderate affinity for lipid bilayers. On Nav1.7/SCN9A, it has been shown to interact with the S3-S4 loop of domain DII (site 4). Is significantly more potent against Nav1.2/SCN2A than the other Nav channel subtypes. In vivo, this toxin causes general ataxia, lack of response to stimuli, and semiparalysis. After a few minutes, the mice are unable to stand, and breathing is reduced in rhythm and intensity. Symptoms gradually increase with progressive slowing of breathing and flaccid paralysis, death occurred within 10 to 20 minutes post injection. Animals remain totally flaccid, and no symptoms of excitatory neurotoxicity are observed. The polypeptide is Beta-theraphotoxin-Cm1a (Ceratogyrus marshalli (Straighthorned baboon tarantula)).